A 572-amino-acid polypeptide reads, in one-letter code: Probable cysteine--tRNA ligase, mitochondrial (572 aa).

Cysteine 81 contacts Zn(2+). Glycine 82 is an L-cysteine binding site. The short motif at 83 to 93 is the 'HIGH' region element; that stretch reads PTVYDHAHLGH. Position 122 (threonine 122) interacts with L-cysteine. A 'KIIK' region motif is present at residues 127–130; the sequence is KIIK. Residues cysteine 260, histidine 285, and glutamate 289 each contribute to the Zn(2+) site. Histidine 285 is a binding site for L-cysteine. The 'KMSKS' region signature appears at 320–324; it reads KMSKS. Residue lysine 323 coordinates ATP.

This sequence belongs to the class-I aminoacyl-tRNA synthetase family. It depends on Zn(2+) as a cofactor.

Its subcellular location is the mitochondrion. The enzyme catalyses tRNA(Cys) + L-cysteine + ATP = L-cysteinyl-tRNA(Cys) + AMP + diphosphate. It catalyses the reaction 2 L-cysteine = S-sulfanyl-L-cysteine + L-alanine. The catalysed reaction is S-sulfanyl-L-cysteine + L-cysteine = S-disulfanyl-L-cysteine + L-alanine. It carries out the reaction S-sulfanyl-L-cysteine + tRNA(Cys) + ATP = (S)-sulfanyl-L-cysteinyl-tRNA(Cys) + AMP + diphosphate. The enzyme catalyses S-disulfanyl-L-cysteine + tRNA(Cys) + ATP = (S)-disulfanyl-L-cysteinyl-tRNA(Cys) + AMP + diphosphate. Functionally, mitochondrial cysteine-specific aminoacyl-tRNA synthetase that catalyzes the ATP-dependent ligation of cysteine to tRNA(Cys). In terms of biological role, in addition to its role as an aminoacyl-tRNA synthetase, has also cysteine persulfide synthase activity. Produces reactive persulfide species such as cysteine persulfide (CysSSH) from substrate cysteine and mediate direct incorporation of CysSSH into proteins during translations, resulting in protein persulfides and polysulfides. CysSSHs behave as potent antioxidants and cellular protectants. This chain is Probable cysteine--tRNA ligase, mitochondrial (cars2), found in Xenopus tropicalis (Western clawed frog).